The primary structure comprises 137 residues: Large ribosomal subunit protein uL16 (137 aa).

This sequence belongs to the universal ribosomal protein uL16 family. As to quaternary structure, part of the 50S ribosomal subunit.

Functionally, binds 23S rRNA and is also seen to make contacts with the A and possibly P site tRNAs. This is Large ribosomal subunit protein uL16 from Pseudomonas fluorescens (strain Pf0-1).